Here is a 421-residue protein sequence, read N- to C-terminus: Phosphoribosylamine--glycine ligase (421 aa).

An ATP-grasp domain is found at 108–314 (KEIMVKYNVP…FAQNIDDIMM (207 aa)). An ATP-binding site is contributed by 134 to 195 (IEEQGAPIVV…EEFLDGEEFS (62 aa)). E284 and N286 together coordinate Mg(2+).

It belongs to the GARS family. It depends on Mg(2+) as a cofactor. Requires Mn(2+) as cofactor.

It catalyses the reaction 5-phospho-beta-D-ribosylamine + glycine + ATP = N(1)-(5-phospho-beta-D-ribosyl)glycinamide + ADP + phosphate + H(+). Its pathway is purine metabolism; IMP biosynthesis via de novo pathway; N(1)-(5-phospho-D-ribosyl)glycinamide from 5-phospho-alpha-D-ribose 1-diphosphate: step 2/2. The chain is Phosphoribosylamine--glycine ligase from Streptococcus pyogenes serotype M6 (strain ATCC BAA-946 / MGAS10394).